Consider the following 466-residue polypeptide: Alpha-1A adrenergic receptor (466 aa).

The Extracellular portion of the chain corresponds to 1-27 (MVLLSENASEGSNCTHPPAQVNISKAI). N7, N13, and N22 each carry an N-linked (GlcNAc...) asparagine glycan. A helical transmembrane segment spans residues 28–51 (LLGVILGGLIIFGVLGNILVILSV). Topologically, residues 52 to 64 (ACHRHLHSVTHYY) are cytoplasmic. A helical transmembrane segment spans residues 65-88 (IVNLAVADLLLTSTVLPFSAIFEI). Residues 89-99 (LGYWAFGRVFC) are Extracellular-facing. A disulfide bridge connects residues C99 and C176. Residues 100 to 122 (NIWAAVDVLCCTASIMGLCIISI) form a helical membrane-spanning segment. Topologically, residues 123 to 143 (DRYIGVSYPLRYPTIVTQRRG) are cytoplasmic. A helical membrane pass occupies residues 144 to 167 (VRALLCVWALSLVISIGPLFGWRQ). The Extracellular segment spans residues 168-181 (QAPEDETICQINEE). Residues 182 to 205 (PGYVLFSALGSFYVPLTIILVMYC) form a helical membrane-spanning segment. At 206-273 (RVYVVAKRES…FSREKKAAKT (68 aa)) the chain is on the cytoplasmic side. A Phosphoserine; by PKA modification is found at S215. Residues 274 to 297 (LGIVVGCFVLCWLPFFLVMPIGSF) form a helical membrane-spanning segment. Residues 298-305 (FPNFKPPE) are Extracellular-facing. A helical membrane pass occupies residues 306–329 (TVFKIVFWLGYLNSCINPIIYPCS). Residues 330-466 (SQEFKKAFQN…ISLGENGEEV (137 aa)) are Cytoplasmic-facing. Residues 334 to 349 (KKAFQNVLRIQCLRRR) carry the Nuclear localization signal motif. Residue C345 is the site of S-palmitoyl cysteine attachment.

The protein belongs to the G-protein coupled receptor 1 family. Adrenergic receptor subfamily. ADRA1A sub-subfamily. Homo- and heterooligomer. Heterooligomerizes with ADRA1B homooligomers in cardiac myocytes. Interacts with CAVIN4.

The protein resides in the nucleus membrane. It is found in the cell membrane. The protein localises to the cytoplasm. It localises to the membrane. Its subcellular location is the caveola. Functionally, this alpha-adrenergic receptor mediates its action by association with G proteins that activate a phosphatidylinositol-calcium second messenger system. Its effect is mediated by G(q) and G(11) proteins. Nuclear ADRA1A-ADRA1B heterooligomers regulate phenylephrine (PE)-stimulated ERK signaling in cardiac myocytes. The protein is Alpha-1A adrenergic receptor (Adra1a) of Mus musculus (Mouse).